Here is a 147-residue protein sequence, read N- to C-terminus: UPF0460 protein in nifX-nifW intergenic region (147 aa).

It belongs to the UPF0460 family.

This is UPF0460 protein in nifX-nifW intergenic region from Frankia alni.